The following is a 156-amino-acid chain: Cytochrome c-type biogenesis protein CcmE 1 (156 aa).

Residues 1-8 (MNATRRQR) lie on the Cytoplasmic side of the membrane. The helical; Signal-anchor for type II membrane protein transmembrane segment at 9 to 29 (LWWVICVLTAAALAVTLIVFA) threads the bilayer. The Periplasmic segment spans residues 30–156 (LQRNMSYLFT…ATATPLTAPR (127 aa)). Heme is bound by residues histidine 123 and tyrosine 127. The segment at 137–156 (AEGHAGKPIPATATPLTAPR) is disordered. Low complexity predominate over residues 146–156 (PATATPLTAPR).

This sequence belongs to the CcmE/CycJ family.

Its subcellular location is the cell inner membrane. In terms of biological role, heme chaperone required for the biogenesis of c-type cytochromes. Transiently binds heme delivered by CcmC and transfers the heme to apo-cytochromes in a process facilitated by CcmF and CcmH. The chain is Cytochrome c-type biogenesis protein CcmE 1 from Xanthomonas euvesicatoria pv. vesicatoria (strain 85-10) (Xanthomonas campestris pv. vesicatoria).